The following is an 847-amino-acid chain: Bifunctional lysine-specific demethylase and histidyl-hydroxylase NO66 (847 aa).

The segment covering 1-24 (MEKVTNSAAAKPQGNNKKQESAYN) has biased composition (polar residues). Disordered regions lie at residues 1–45 (MEKV…SDLL), 203–223 (AEAD…KESV), and 254–320 (AEKE…ERKQ). Residues 203-214 (AEADAKNNDTKK) show a composition bias toward basic and acidic residues. A compositionally biased stretch (low complexity) spans 268 to 278 (STSSKEAAAAK). A compositionally biased stretch (basic and acidic residues) spans 279–288 (TADHERRLLA). Over residues 304–314 (AMESVATQGAS) the composition is skewed to polar residues. The residue at position 323 (S323) is a Phosphoserine. Phosphothreonine is present on T329. A Phosphoserine modification is found at S330. Residues 377–401 (KAPEEGNNNNDEKEMSTETSETHKT) form a disordered region. Over residues 386–401 (NDEKEMSTETSETHKT) the composition is skewed to basic and acidic residues. In terms of domain architecture, JmjC spans 499–644 (CSIRLLNPSA…NLLETLMPMV (146 aa)). Residues H545, D547, and H610 each coordinate Fe cation.

It belongs to the ROX family. NO66 subfamily. It depends on Fe(2+) as a cofactor.

It localises to the nucleus. It catalyses the reaction N(6),N(6)-dimethyl-L-lysyl(36)-[histone H3] + 2 2-oxoglutarate + 2 O2 = L-lysyl(36)-[histone H3] + 2 formaldehyde + 2 succinate + 2 CO2. In terms of biological role, oxygenase that can act as both a histone lysine demethylase and a ribosomal histidine hydroxylase. Specifically demethylates 'Lys-4' (H3K4me) and 'Lys-36' (H3K36me) of histone H3, thereby playing a central role in histone code. This chain is Bifunctional lysine-specific demethylase and histidyl-hydroxylase NO66, found in Drosophila simulans (Fruit fly).